Here is a 518-residue protein sequence, read N- to C-terminus: Reduced folate transporter (518 aa).

An N-acetylmethionine modification is found at M1. Over 1–29 (MVPTGQVAEKQACEEPRQDRELKSWRCLV) the chain is Cytoplasmic. Residues 30 to 50 (FYLCFFGFMAQLRPGESFITP) traverse the membrane as a helical segment. Residues I48 and T49 each contribute to the folate site. The Extracellular portion of the chain corresponds to 51-62 (YLLQQNFTIEQV). N56 is a glycosylation site (N-linked (GlcNAc...) asparagine). Residues 63–85 (TNEIIPVLPYSHLAVLVPIFLLT) form a helical membrane-spanning segment. The Cytoplasmic portion of the chain corresponds to 86–89 (DYLR). The helical transmembrane segment at 90–110 (YKPILILQCLSFMCVWLLLLL) threads the bilayer. Topologically, residues 111 to 114 (GTSV) are extracellular. A helical membrane pass occupies residues 115–137 (VHMQLMEVFYSVTMAARIAYSSY). The folate site is built by E121 and R131. The Cytoplasmic portion of the chain corresponds to 138 to 151 (IFSLVRPSRYQRMA). The helical transmembrane segment at 152-176 (SYSRAAVLLGVFTSSVLGQVLWPLE) threads the bilayer. V162 lines the folate pocket. At 177–181 (QKSQN) the chain is on the extracellular side. The chain crosses the membrane as a helical span at residues 182-200 (SNMLNYISLGFIIFSLGLS). At 201-266 (LFLKRPKHSL…LSELVGNLRQ (66 aa)) the chain is on the cytoplasmic side. A helical transmembrane segment spans residues 267-292 (PQLRLWCLWWVFNSAGYYLIVYYVHV). Residues A281, G282, and I286 each contribute to the folate site. Topologically, residues 293-300 (LWSIDKNL) are extracellular. The helical transmembrane segment at 301-323 (NYNGAVDAASTLLSAITSFSAGF) threads the bilayer. Topologically, residues 324 to 329 (VKIRWA) are cytoplasmic. The helical transmembrane segment at 330–350 (LWSKLVIASVIAIQAGLVFCM) threads the bilayer. Topologically, residues 351-353 (YMV) are extracellular. A helical transmembrane segment spans residues 354–377 (HYVTWVHKIWVLYMTYVLFRGAYQ). Residues Y366 and V370 each coordinate folate. Residues 378-391 (FLVPIATFQIASSL) are Cytoplasmic-facing. Residues 392-415 (SKELCALVFGINTFLATALKTAIT) form a helical membrane-spanning segment. The segment at 407-419 (ATALKTAITLVVS) is required for substrate-binding. At 416-423 (LVVSDKRG) the chain is on the extracellular side. The helical transmembrane segment at 424–448 (LGLKVEKQFCIYSVYFMVLSVICFV) threads the bilayer. Residues 449–512 (GAVLDGVRYC…DGVEDSEASL (64 aa)) lie on the Cytoplasmic side of the membrane. Phosphoserine occurs at positions 473, 478, and 483. Residues 480–518 (QVPSMQDGGLGGLQPSAPQLLPEDGVEDSEASLRAEAKA) form a disordered region.

The protein belongs to the reduced folate carrier (RFC) transporter (TC 2.A.48) family.

The protein resides in the cell membrane. The protein localises to the apical cell membrane. It is found in the basolateral cell membrane. The catalysed reaction is 5-amino-1-(5-phospho-beta-D-ribosyl)imidazole-4-carboxamide(in) + (6S)-5-methyl-5,6,7,8-tetrahydrofolate(out) = 5-amino-1-(5-phospho-beta-D-ribosyl)imidazole-4-carboxamide(out) + (6S)-5-methyl-5,6,7,8-tetrahydrofolate(in). Functionally, antiporter that mediates the import of reduced folates, driven by the export of organic anions. Also acts as an importer of immunoreactive cyclic dinucleotides, but with a lower transporter activity. Mechanistically, acts as a secondary active transporter, which exports intracellular organic anions down their concentration gradients to facilitate the uptake of its substrates. Has high affinity for N5-methyltetrahydrofolate, the predominant circulating form of folate. Also mediates the import of antifolate drug methotrexate. 5-amino-4-imidazolecarboxamide riboside (AICAR), when phosphorylated to AICAR monophosphate, can serve as an organic anion for antiporter activity. This Cricetulus griseus (Chinese hamster) protein is Reduced folate transporter.